A 485-amino-acid chain; its full sequence is WAS/WASL-interacting protein family member 3 (485 aa).

The span at 1-41 (MPVPPPPPPPPPPPPPPPPPLGAPPPPPLGAPPPPPPPGPP) shows a compositional bias: pro residues. The disordered stretch occupies residues 1–485 (MPVPPPPPPP…QLSLKALPVR (485 aa)). Short sequence motifs (profilin-binding motif) lie at residues 3 to 8 (VPPPPP), 11 to 16 (PPPPPP), and 31 to 36 (APPPPP). The 18-residue stretch at 56-73 (GRSALLADIQQGTRLRKV) folds into the WH2 domain. Arginine 57 carries the post-translational modification Asymmetric dimethylarginine. The RLRK signature appears at 69-72 (RLRK). A Phosphoserine modification is found at serine 161. Residues 176-203 (PVPPRPSVPAPPPPTPPPPPPPPLPPAS) show a composition bias toward pro residues. Serine 211 is subject to Phosphoserine. Residues 212–246 (PPAPPTKVNPSVVPPPLPCAPPLPPPPPTPPPLPP) are compositionally biased toward pro residues. The span at 247–262 (ASALSDKAVRPQLAPL) shows a compositional bias: low complexity. Composition is skewed to pro residues over residues 263–278 (HLPP…PPCG) and 296–312 (PPAP…PPLP). Serine 392 bears the Phosphoserine mark. A compositionally biased stretch (polar residues) spans 392–405 (SPTTELSSKSQQPG). Residues 415–439 (AIDDFESKFTFHSMEDFPPPDEYKP) are compositionally biased toward basic and acidic residues. Residues 424 to 448 (TFHSMEDFPPPDEYKPCQKIYPSKV) carry the WASP-binding motif motif.

As to quaternary structure, interacts with WASL, and monomeric and filamentous actin. As to expression, isoform 1 is expressed in brain and testis and isoform 2 is expressed only in brain (at protein level).

It is found in the cytoplasm. Functionally, may be a regulator of cytoskeletal organization (Potential). May have a role in spermatogenesis. The protein is WAS/WASL-interacting protein family member 3 (Wipf3) of Mus musculus (Mouse).